The sequence spans 251 residues: Urease accessory protein UreF (251 aa).

The interval 1–20 (MAPAPDPAPAGSAAPDPASA) is disordered. Residues 9 to 20 (PAGSAAPDPASA) are compositionally biased toward low complexity.

The protein belongs to the UreF family. UreD, UreF and UreG form a complex that acts as a GTP-hydrolysis-dependent molecular chaperone, activating the urease apoprotein by helping to assemble the nickel containing metallocenter of UreC. The UreE protein probably delivers the nickel.

Its subcellular location is the cytoplasm. Its function is as follows. Required for maturation of urease via the functional incorporation of the urease nickel metallocenter. In Paracidovorax citrulli (strain AAC00-1) (Acidovorax citrulli), this protein is Urease accessory protein UreF.